The sequence spans 327 residues: Probable cell division protein WhiA (327 aa).

The segment at residues 275–308 (SLEELGRLADPQMTKDAVAGRIRRLLTMADKRAE) is a DNA-binding region (H-T-H motif).

The protein belongs to the WhiA family.

Involved in cell division and chromosome segregation. In Corynebacterium glutamicum (strain R), this protein is Probable cell division protein WhiA.